The sequence spans 873 residues: Nonsense-mediated mRNA decay factor SMG8 (873 aa).

The segment at 531 to 604 (AKKMAQREDE…ESMASKTERE (74 aa)) is disordered. A compositionally biased stretch (acidic residues) spans 540-550 (ELAEEDTDLDI). 2 stretches are compositionally biased toward low complexity: residues 551-562 (PESLLDPDSTSP) and 574-583 (SSSESSSQES). The span at 591-604 (SRRDESMASKTERE) shows a compositional bias: basic and acidic residues.

This sequence belongs to the SMG8 family.

Its function is as follows. Involved in nonsense-mediated decay (NMD) of mRNAs containing premature stop codons. Probable component of kinase complex containing smg-1 and recruited to stalled ribosomes. The polypeptide is Nonsense-mediated mRNA decay factor SMG8 (smg-8) (Caenorhabditis elegans).